The sequence spans 295 residues: Tyrosine recombinase XerD (295 aa).

A Core-binding (CB) domain is found at 1–85 (METIIEEYLK…TIRSFHQFAL (85 aa)). Residues 106–289 (KLPDVLDVEE…SKTQIRQMYN (184 aa)) enclose the Tyr recombinase domain. Active-site residues include Arg146, Lys170, His241, Arg244, and His267. The active-site O-(3'-phospho-DNA)-tyrosine intermediate is Tyr276.

Belongs to the 'phage' integrase family. XerD subfamily. In terms of assembly, forms a cyclic heterotetrameric complex composed of two molecules of XerC and two molecules of XerD.

Its subcellular location is the cytoplasm. Site-specific tyrosine recombinase, which acts by catalyzing the cutting and rejoining of the recombining DNA molecules. The XerC-XerD complex is essential to convert dimers of the bacterial chromosome into monomers to permit their segregation at cell division. It also contributes to the segregational stability of plasmids. In Staphylococcus haemolyticus (strain JCSC1435), this protein is Tyrosine recombinase XerD.